Consider the following 131-residue polypeptide: Small ribosomal subunit protein uS8 (131 aa).

It belongs to the universal ribosomal protein uS8 family. Part of the 30S ribosomal subunit. Contacts proteins S5 and S12.

In terms of biological role, one of the primary rRNA binding proteins, it binds directly to 16S rRNA central domain where it helps coordinate assembly of the platform of the 30S subunit. In Cupriavidus necator (strain ATCC 17699 / DSM 428 / KCTC 22496 / NCIMB 10442 / H16 / Stanier 337) (Ralstonia eutropha), this protein is Small ribosomal subunit protein uS8.